Here is an 803-residue protein sequence, read N- to C-terminus: Translation initiation factor IF-2 (803 aa).

Disordered stretches follow at residues 93–123 and 138–206; these read TKPV…LNEK and EVKE…ASAK. Residues 111 to 121 are compositionally biased toward polar residues; sequence VPPTSDTTNLN. The segment covering 138-155 has biased composition (basic and acidic residues); that stretch reads EVKEEAKKTPSEKKETPK. Residues 156–167 show a composition bias toward basic residues; that stretch reads KGPRKETRRSRK. Residues 168–188 are compositionally biased toward basic and acidic residues; the sequence is PDKEDKWEREELHMTKLVEER. Residues 302–471 enclose the tr-type G domain; sequence PRAPVVTIMG…LLQAEVLELK (170 aa). The tract at residues 311–318 is G1; it reads GHVDHGKT. Position 311–318 (311–318) interacts with GTP; it reads GHVDHGKT. The tract at residues 336-340 is G2; it reads GITQH. Residues 357–360 are G3; sequence DTPG. Residues 357-361 and 411-414 each bind GTP; these read DTPGH and NKID. Residues 411–414 form a G4 region; it reads NKID. Residues 447–449 are G5; sequence SAK.

The protein belongs to the TRAFAC class translation factor GTPase superfamily. Classic translation factor GTPase family. IF-2 subfamily.

It localises to the cytoplasm. Its function is as follows. One of the essential components for the initiation of protein synthesis. Protects formylmethionyl-tRNA from spontaneous hydrolysis and promotes its binding to the 30S ribosomal subunits. Also involved in the hydrolysis of GTP during the formation of the 70S ribosomal complex. The sequence is that of Translation initiation factor IF-2 from Coxiella burnetii (strain RSA 493 / Nine Mile phase I).